The primary structure comprises 617 residues: uncharacterized protein (617 aa).

Positions 387 to 396 (NGGMSATQLP) are enriched in polar residues. Disordered stretches follow at residues 387 to 419 (NGGM…HAAP) and 443 to 599 (YDDF…NNEQ). A compositionally biased stretch (low complexity) spans 404-414 (RQAAANQFQQR). The segment covering 453-474 (QPLTQQQKDAARQRYQSASPEQ) has biased composition (polar residues). Basic and acidic residues-rich tracts occupy residues 490–499 (QRREAARERI) and 522–531 (QRRDAARERI). A compositionally biased stretch (polar residues) spans 549–570 (RPLNQQQRDNARQRVQSASPEQ). Over residues 572–585 (QVFREKVQESRPQR) the composition is skewed to basic and acidic residues. Polar residues predominate over residues 586–599 (LNDSNHTVRLNNEQ).

This is an uncharacterized protein from Escherichia coli (strain K12).